The sequence spans 544 residues: Phosphoenolpyruvate carboxykinase (ATP) (544 aa).

246-253 serves as a coordination point for ATP; that stretch reads GLSGTGKT.

Belongs to the phosphoenolpyruvate carboxykinase (ATP) family.

It carries out the reaction oxaloacetate + ATP = phosphoenolpyruvate + ADP + CO2. It functions in the pathway carbohydrate biosynthesis; gluconeogenesis. This chain is Phosphoenolpyruvate carboxykinase (ATP) (PCK1), found in Candida glabrata (strain ATCC 2001 / BCRC 20586 / JCM 3761 / NBRC 0622 / NRRL Y-65 / CBS 138) (Yeast).